Here is a 269-residue protein sequence, read N- to C-terminus: Hydroxypyruvate/pyruvate aldolase (269 aa).

Histidine 48 functions as the Proton acceptor in the catalytic mechanism. Glutamate 152 and aspartate 178 together coordinate a divalent metal cation.

This sequence belongs to the HpcH/HpaI aldolase family. The cofactor is a divalent metal cation.

It carries out the reaction D-glyceraldehyde + pyruvate = 2-dehydro-3-deoxy-L-galactonate. Its function is as follows. Aldolase which can catalyze in vitro the aldolisation reaction between hydroxypyruvate (HPA) or pyruvate (PA) and D-glyceraldehyde (D-GA). The condensation of pyruvate and D-glyceraldehyde produces 2-dehydro-3-deoxy-L-galactonate as the major product. Has weak activity with hydroxypyruvate and D-glyceraldehyde. The protein is Hydroxypyruvate/pyruvate aldolase of Delftia acidovorans (strain DSM 14801 / SPH-1).